Here is a 71-residue protein sequence, read N- to C-terminus: Beta-defensin 25 (71 aa).

The first 22 residues, 1–22, serve as a signal peptide directing secretion; it reads MAKWILLIVALLVLGHVPSGST. Intrachain disulfides connect cysteine 27-cysteine 54, cysteine 34-cysteine 48, and cysteine 38-cysteine 55.

This sequence belongs to the beta-defensin family.

It is found in the secreted. Its function is as follows. Has antibacterial activity. The protein is Beta-defensin 25 (Defb25) of Rattus norvegicus (Rat).